Reading from the N-terminus, the 145-residue chain is Basic phospholipase A2 PC10 (145 aa).

The signal sequence occupies residues 1 to 21; it reads MYPAHLLLLLAVCVSLLGASA. The propeptide occupies 22 to 27; the sequence is IPPLPL. 7 disulfides stabilise this stretch: C38–C98, C54–C144, C56–C72, C71–C125, C78–C118, C87–C111, and C105–C116. Ca(2+) contacts are provided by Y55, G57, and G59. The active site involves H75. D76 serves as a coordination point for Ca(2+). Residue D119 is part of the active site.

It belongs to the phospholipase A2 family. Group I subfamily. D49 sub-subfamily. Requires Ca(2+) as cofactor.

The protein localises to the secreted. The catalysed reaction is a 1,2-diacyl-sn-glycero-3-phosphocholine + H2O = a 1-acyl-sn-glycero-3-phosphocholine + a fatty acid + H(+). Functionally, PLA2 catalyzes the calcium-dependent hydrolysis of the 2-acyl groups in 3-sn-phosphoglycerides. The sequence is that of Basic phospholipase A2 PC10 from Laticauda laticaudata (Blue-ringed sea krait).